A 23-amino-acid chain; its full sequence is Unknown protein NF005 from 2D-PAGE (23 aa).

The tract at residues 1 to 23 is disordered; sequence AGKARKQLSKNEDTKLKEQYIXD. Over residues 9–23 the composition is skewed to basic and acidic residues; it reads SKNEDTKLKEQYIXD.

The chain is Unknown protein NF005 from 2D-PAGE from Naegleria fowleri (Brain eating amoeba).